The following is a 212-amino-acid chain: Thymidylate kinase (212 aa).

10–17 is a binding site for ATP; it reads GLEGAGKT.

It belongs to the thymidylate kinase family.

The catalysed reaction is dTMP + ATP = dTDP + ADP. Functionally, phosphorylation of dTMP to form dTDP in both de novo and salvage pathways of dTTP synthesis. This Serratia proteamaculans (strain 568) protein is Thymidylate kinase.